Reading from the N-terminus, the 327-residue chain is MSATTTEAKQTFLCKERLPRRYHPPSKVLSRLPTSFLPYGELLRLHKPLGYILVCYPFLVAGAFSASIAPEVLEADFWPRITLLCLWSIFLRSGGCIWDDIADQHVDAKVARTRLRPLPRGAVSNSQATIFAAGTFLCGFAFVAELPGVCMVDALIMLFFAVLYPYGKRHSNYPQLILGTIGWAIPMTMHGLNLRPLDHPIPMAAMFAFIALVTIMNDIIYARQDIEEDIKAGVGSMAVRFQHCLDALTFALVFASSAALVIAGKLGNMGAPFFTISVGGHFGFFLFLAMANQRDPKSGVEWAAKRCCTSATFLLIVGMVVDLVWRS.

The next 8 membrane-spanning stretches (helical) occupy residues 49 to 69 (LGYI…ASIA), 81 to 101 (ITLL…WDDI), 140 to 160 (FAFV…MLFF), 174 to 194 (PQLI…GLNL), 201 to 221 (IPMA…DIIY), 244 to 264 (CLDA…VIAG), 271 to 291 (APFF…LAMA), and 307 to 327 (CCTS…VWRS).

It belongs to the UbiA prenyltransferase family. Mg(2+) serves as cofactor.

It localises to the membrane. It participates in secondary metabolite biosynthesis; terpenoid biosynthesis. Polyprenyl transferase; part of the gene cluster that mediates the biosynthesis of anditomin, a fungal meroterpenoid. The first step of the pathway is the synthesis of 3,5-dimethylorsellinic acid (DMOA) by the polyketide synthase andM. DMOA is then converted to the phthalide compound 5,7-dihydroxy-4,6-dimethylphthalide (DHDMP) by the cytochrome P450 monooxygenase andK, which is further prenylated by the prenyltransferase andD to yield farnesyl-DHDMP. Further epoxidation by the FAD-dependent monooxygenase andE leads to epoxyfarnesyl-DHDMP. The next step involves the terpene cyclase andB that converts epoxyfarnesyl-DHDMP into preandiloid A through opening of the epoxide ring followed by the cyclization of the farnesyl moiety. Preandiloid A is in turn oxidized at the C-3 hydroxyl group to yield preandiloid B by the dehydrogenase andC. The dioxygenase andA is solely responsible for the dehydrogenation of preandiloid B leading to the enone preandiloid C, as well as for the intriguing structural rearrangement to generate the bicyclo[2.2.2]octane core, transforming preandiloid C into andiconin. FAD-binding monooxygenase andJ then produces andilesin D which is reduced by dehydrogenase andI to yield andilesin A. Action of acetyltransferase andG followed by a spontaneous acetate elimination leads then to andilesin B, which is in turn substrate of the short chain dehydrogenase andH to yield andilesin C. Finally, the dioxygenase andF catalyzes the transformation of andilesin C to anditomin. This is Polyprenyl transferase andD from Emericella variicolor (Aspergillus stellatus).